The following is a 1556-amino-acid chain: Ubiquitin carboxyl-terminal hydrolase 47 (1556 aa).

Residues M117 to K231 are disordered. The segment covering A146 to K156 has biased composition (low complexity). Phosphoserine is present on residues S172 and S173. Residues I180–K189 are compositionally biased toward low complexity. Over residues G191–P200 the composition is skewed to basic and acidic residues. Positions T208 to S219 are enriched in polar residues. Residue S238 is modified to Phosphoserine. The region spanning V396–V779 is the USP domain. The active-site Nucleophile is C405. Polar residues-rich tracts occupy residues N628 to G642 and L661 to Q673. Positions N628 to Q697 are disordered. Positions S688–Q697 are enriched in low complexity. Catalysis depends on H720, which acts as the Proton acceptor. Positions E1087 to S1148 are disordered. The span at D1109–G1125 shows a compositional bias: basic and acidic residues. A compositionally biased stretch (low complexity) spans S1128 to S1141. 7 positions are modified to phosphoserine: S1131, S1132, S1140, S1141, S1199, S1201, and S1205.

This sequence belongs to the peptidase C19 family. Interacts with ttk.

It is found in the nucleus. It carries out the reaction Thiol-dependent hydrolysis of ester, thioester, amide, peptide and isopeptide bonds formed by the C-terminal Gly of ubiquitin (a 76-residue protein attached to proteins as an intracellular targeting signal).. Functionally, ubiquitin-specific protease that deubiquitinates target proteins to regulate different cellular and developmental pathways. Functions downstream of Dsor1/MEK to positively regulate the Ras/MAPK signaling pathway. Likely to modulate the pathway during various cellular and developmental processes including rl/MAPK activation by the receptors InR, Egfr and sevenless/sev. Functions in the post-translational stabilization of rl/MAPK levels in a mechanism that is independent of rl activity and opposes the activity of the E2 enzyme Unc6 and the putative E3 ligases poe, Ufd4 and Kcmf1, which mediate the ubiquitination and proteasomal degradation of rl. During eye development it may also act downstream of rl/MAPK to negatively regulate the Ras/MAPK signaling pathway by stabilizing the transcriptional repressor ttk and consequently inhibiting photoreceptor cell development. This suggests that at least during eye development, it may act in both the positive and negative regulation of the Ras/MAPK signaling pathway to mediate the development of different cell types. Positively regulates border follicle cell migration during oogenesis by mediating the deubiquitination and stabilization of slbo. In the wing disks it positively regulates wg signaling by stabilizing arm. Has an effect on position-effect variegation. The chain is Ubiquitin carboxyl-terminal hydrolase 47 from Drosophila melanogaster (Fruit fly).